The primary structure comprises 362 residues: Epoxide hydrolase 4 (362 aa).

A helical; Signal-anchor for type II membrane protein membrane pass occupies residues 17 to 37 (SLLFWSLVYCYCGLCASIHLL). An AB hydrolase-1 domain is found at 94 to 211 (PLMLLLHGFP…EYILRHPAQL (118 aa)). Asp169 serves as the catalytic Nucleophile. The Proton donor role is filled by Tyr281. The active-site Proton acceptor is His336.

This sequence belongs to the AB hydrolase superfamily. Epoxide hydrolase family.

Its subcellular location is the membrane. This Homo sapiens (Human) protein is Epoxide hydrolase 4 (EPHX4).